Consider the following 194-residue polypeptide: dITP/XTP pyrophosphatase (194 aa).

8–13 (TKNKGK) is a binding site for substrate. Residues Glu41 and Asp70 each coordinate Mg(2+). Residue Asp70 is the Proton acceptor of the active site. Residues Ser71, 153–156 (FGYD), Lys176, and 181–182 (HR) contribute to the substrate site.

The protein belongs to the HAM1 NTPase family. Homodimer. Mg(2+) is required as a cofactor.

It carries out the reaction XTP + H2O = XMP + diphosphate + H(+). The enzyme catalyses dITP + H2O = dIMP + diphosphate + H(+). It catalyses the reaction ITP + H2O = IMP + diphosphate + H(+). Functionally, pyrophosphatase that catalyzes the hydrolysis of nucleoside triphosphates to their monophosphate derivatives, with a high preference for the non-canonical purine nucleotides XTP (xanthosine triphosphate), dITP (deoxyinosine triphosphate) and ITP. Seems to function as a house-cleaning enzyme that removes non-canonical purine nucleotides from the nucleotide pool, thus preventing their incorporation into DNA/RNA and avoiding chromosomal lesions. The polypeptide is dITP/XTP pyrophosphatase (Halalkalibacterium halodurans (strain ATCC BAA-125 / DSM 18197 / FERM 7344 / JCM 9153 / C-125) (Bacillus halodurans)).